Here is a 79-residue protein sequence, read N- to C-terminus: Delta-hormotoxin-Cpt1b (79 aa).

The signal sequence occupies residues 1–20 (MKTQVLALFVLCVLFCLAES). Residues 21-31 (RTTLNKRNDIE) constitute a propeptide that is removed on maturation. Intrachain disulfides connect Cys36-Cys75, Cys38-Cys66, and Cys56-Cys76.

Belongs to the sea anemone sodium channel inhibitory toxin family.

The protein localises to the secreted. The protein resides in the nematocyst. Functionally, in neuromuscular preparation of crustaceans, the toxin increased neurotransmitter release, causing repetitive firing of the axons. May affect sodium channels (Nav). The polypeptide is Delta-hormotoxin-Cpt1b (Calliactis parasitica (Sea anemone)).